A 272-amino-acid chain; its full sequence is 4-hydroxy-tetrahydrodipicolinate reductase (272 aa).

An NAD(+)-binding site is contributed by 10-15 (GAAGRM). Arg37 provides a ligand contact to NADP(+). NAD(+)-binding positions include 100 to 102 (GTT) and 124 to 127 (SGNM). The active-site Proton donor/acceptor is the His157. His158 is a binding site for (S)-2,3,4,5-tetrahydrodipicolinate. Catalysis depends on Lys161, which acts as the Proton donor. 167 to 168 (GT) serves as a coordination point for (S)-2,3,4,5-tetrahydrodipicolinate.

The protein belongs to the DapB family.

It localises to the cytoplasm. The enzyme catalyses (S)-2,3,4,5-tetrahydrodipicolinate + NAD(+) + H2O = (2S,4S)-4-hydroxy-2,3,4,5-tetrahydrodipicolinate + NADH + H(+). The catalysed reaction is (S)-2,3,4,5-tetrahydrodipicolinate + NADP(+) + H2O = (2S,4S)-4-hydroxy-2,3,4,5-tetrahydrodipicolinate + NADPH + H(+). It functions in the pathway amino-acid biosynthesis; L-lysine biosynthesis via DAP pathway; (S)-tetrahydrodipicolinate from L-aspartate: step 4/4. Functionally, catalyzes the conversion of 4-hydroxy-tetrahydrodipicolinate (HTPA) to tetrahydrodipicolinate. The polypeptide is 4-hydroxy-tetrahydrodipicolinate reductase (Methylocella silvestris (strain DSM 15510 / CIP 108128 / LMG 27833 / NCIMB 13906 / BL2)).